Reading from the N-terminus, the 354-residue chain is Homeobox-leucine zipper protein HOX27 (354 aa).

The interval 98 to 175 (SVAAGAPGME…DDEGASARKK (78 aa)) is disordered. A compositionally biased stretch (gly residues) spans 148–157 (QGGGGGGGGE). A DNA-binding region (homeobox) is located at residues 171–230 (SARKKLRLSKEQSAFLEESFKEHSTLNPKQKVALAKQLNLRPRQVEVWFQNRRARTKLKQ). The leucine-zipper stretch occupies residues 229-273 (KQTEVDCEYLKRCCETLTEENRRLHKELAELRALKTARPFYMHLP). A disordered region spans residues 294–323 (STSAPAAATSPAAAPTAAARTAVASPEPHR).

It belongs to the HD-ZIP homeobox family. Class II subfamily. In terms of tissue distribution, expressed in seedlings, roots, stems, leaf sheaths and blades and panicles.

Its subcellular location is the nucleus. In terms of biological role, probable transcription factor. The protein is Homeobox-leucine zipper protein HOX27 (HOX27) of Oryza sativa subsp. indica (Rice).